Here is a 152-residue protein sequence, read N- to C-terminus: Ribonuclease H (152 aa).

The RNase H type-1 domain maps to methionine 1 to alanine 142. Positions 9, 47, 69, and 134 each coordinate Mg(2+).

The protein belongs to the RNase H family. In terms of assembly, monomer. The cofactor is Mg(2+).

Its subcellular location is the cytoplasm. The enzyme catalyses Endonucleolytic cleavage to 5'-phosphomonoester.. Endonuclease that specifically degrades the RNA of RNA-DNA hybrids. This is Ribonuclease H from Moorella thermoacetica (strain ATCC 39073 / JCM 9320).